Reading from the N-terminus, the 223-residue chain is Adenylate kinase (223 aa).

17–22 (GAGKGT) is a binding site for ATP. Positions 37-66 (STGDMLRSQVAKGTPLGVEAKKIMDQGGLV) are NMP. Residues Thr38, Arg43, 64–66 (GLV), 93–96 (GFPR), and Gln100 each bind AMP. The segment at 134–171 (GRLVHPSSGRSYHKLFNPPKVEMTDDVTGEPLVQRSDD) is LID. Residues Arg135 and 144 to 145 (SY) contribute to the ATP site. AMP-binding residues include Arg168 and Arg179. Gln207 contacts ATP.

It belongs to the adenylate kinase family. AK2 subfamily. In terms of assembly, monomer.

It is found in the cytoplasm. The protein resides in the cytosol. It localises to the mitochondrion intermembrane space. It carries out the reaction AMP + ATP = 2 ADP. Its function is as follows. Catalyzes the reversible transfer of the terminal phosphate group between ATP and AMP. Plays an important role in cellular energy homeostasis and in adenine nucleotide metabolism. Adenylate kinase activity is critical for regulation of the phosphate utilization and the AMP de novo biosynthesis pathways. This is Adenylate kinase from Vanderwaltozyma polyspora (strain ATCC 22028 / DSM 70294 / BCRC 21397 / CBS 2163 / NBRC 10782 / NRRL Y-8283 / UCD 57-17) (Kluyveromyces polysporus).